A 420-amino-acid polypeptide reads, in one-letter code: Putative sporulation-specific glycosylase YdhD (420 aa).

2 consecutive LysM domains span residues 2–45 (FIHI…ALLI) and 48–92 (YVYT…KITI). One can recognise a GH18 domain in the interval 100–420 (AGTLSFYVLR…LRKFFTIRKV (321 aa)). E212 serves as the catalytic Proton donor.

This sequence belongs to the glycosyl hydrolase 18 family. Chitinase class II subfamily.

It localises to the spore wall. This Bacillus subtilis (strain 168) protein is Putative sporulation-specific glycosylase YdhD (ydhD).